Here is a 396-residue protein sequence, read N- to C-terminus: Elongation factor Tu 2 (396 aa).

Residues 10 to 206 (KPHVNIGTIG…AVDEYIPTPE (197 aa)) enclose the tr-type G domain. The segment at 19 to 26 (GHVDHGKT) is G1. A GTP-binding site is contributed by 19-26 (GHVDHGKT). Thr26 contributes to the Mg(2+) binding site. The G2 stretch occupies residues 60-64 (GITIN). The interval 81-84 (DCPG) is G3. GTP-binding positions include 81–85 (DCPGH) and 136–139 (NKVD). The G4 stretch occupies residues 136–139 (NKVD). Residues 174–176 (SAL) form a G5 region.

It belongs to the TRAFAC class translation factor GTPase superfamily. Classic translation factor GTPase family. EF-Tu/EF-1A subfamily. Monomer.

It localises to the cytoplasm. It carries out the reaction GTP + H2O = GDP + phosphate + H(+). Functionally, GTP hydrolase that promotes the GTP-dependent binding of aminoacyl-tRNA to the A-site of ribosomes during protein biosynthesis. The sequence is that of Elongation factor Tu 2 from Hyphomonas neptunium (strain ATCC 15444).